A 388-amino-acid polypeptide reads, in one-letter code: Coproporphyrin III ferrochelatase (388 aa).

Fe-coproporphyrin III-binding residues include Ser59 and Tyr124. Positions 186 and 276 each coordinate Fe(2+). Residues 349–369 are disordered; it reads QSPQHASRAVTDAAATGRRGD.

This sequence belongs to the ferrochelatase family.

It is found in the cytoplasm. The enzyme catalyses Fe-coproporphyrin III + 2 H(+) = coproporphyrin III + Fe(2+). It participates in porphyrin-containing compound metabolism; protoheme biosynthesis. Its function is as follows. Involved in coproporphyrin-dependent heme b biosynthesis. Catalyzes the insertion of ferrous iron into coproporphyrin III to form Fe-coproporphyrin III. This chain is Coproporphyrin III ferrochelatase, found in Frankia alni (strain DSM 45986 / CECT 9034 / ACN14a).